The following is a 173-amino-acid chain: Protein SUGARY ENHANCER 1 (173 aa).

The interval 1–31 (MIRPAPWVGAGHRGRGGEAGACTESLGSESG) is disordered.

The protein belongs to the fantastic four family.

In terms of biological role, involved in starch metabolism in endosperm. Acts as a modifier of SUGARY1 (SU1), an isoamylase starch-debranching enzyme involved in amylopectin biosynthesis in endosperm. This is Protein SUGARY ENHANCER 1 from Zea mays (Maize).